Reading from the N-terminus, the 530-residue chain is T-complex protein 1 subunit delta (530 aa).

Polar residues predominate over residues 1–13; that stretch reads MVSQAKQPSNATF. Positions 1–20 are disordered; the sequence is MVSQAKQPSNATFKNREKPQ.

This sequence belongs to the TCP-1 chaperonin family. As to quaternary structure, heterooligomeric complex of about 850 to 900 kDa that forms two stacked rings, 12 to 16 nm in diameter.

The protein localises to the cytoplasm. Its function is as follows. Molecular chaperone; assists the folding of proteins upon ATP hydrolysis. Known to play a role, in vitro, in the folding of actin and tubulin. This Kluyveromyces lactis (strain ATCC 8585 / CBS 2359 / DSM 70799 / NBRC 1267 / NRRL Y-1140 / WM37) (Yeast) protein is T-complex protein 1 subunit delta (CCT4).